The primary structure comprises 144 residues: Ninjurin-2 (144 aa).

At 1–62 (MESDREIIHL…KSVLEQGPFS (62 aa)) the chain is on the extracellular side. The segment at 27–39 (NHYATKKSVAESM) is helix alpha1. Positions 40–59 (LDVALFMSNAMRLKSVLEQG) are helix alpha2. The chain crosses the membrane as a helical span at residues 63–94 (QYYTTLLTLISASLLLQVVIGILLVVIARLNL). Residues 95–98 (NEVE) are Cytoplasmic-facing. A helical membrane pass occupies residues 99–128 (NQWRLNQLNNAATTLVFITVVINIFITAFG). Residue glutamine 105 participates in cholesterol binding. The Extracellular portion of the chain corresponds to 129-144 (AHKTGSVAARTSSNPI).

It belongs to the ninjurin family. In terms of assembly, homooligomer; in response to stimuli, homooligomerizes into filaments. In contrast to NINJ1, the filament is curved toward the intracellular space, preventing its circularization on a relatively flat membrane to mediate plasma membrane rupture: curvature is caused by cholesterol-binding at the cytoplasmic leaflet.

Its subcellular location is the cell membrane. Functionally, its role in unclear. In contrast to NINJ1 paralog, does not mediate plasma membrane rupture (cytolysis) downstream of necroptotic and pyroptotic programmed cell death. While it is able to oligomerize and form filaments, filaments are curved toward the intracellular space, preventing circularization to mediate plasma membrane rupture. May act as a homophilic transmembrane adhesion molecule involved in nerve regeneration. Promotes axonal growth. This chain is Ninjurin-2 (Ninj2), found in Rattus norvegicus (Rat).